Consider the following 398-residue polypeptide: MPLEVVVELQIRAISCPGVFLPDKEVVYLGVYLLNQYLETDCFPSVFPIVIQQSMRFEKVFEEAMDPGAVAELLESFLTRFELVQLVSPAWEELAYYEKNTRDFLFPEPKLTSSHLGMQREVLMKTAIWFPGIAPKLEFSTRTAILECVFPCKNRFLWEERCKLQQSFSKLNGPANNRKKKPKEKNSDQLSKGTPFWGPSPQRLHLHRPTQRNPGKSFRFLGERKPPFVVRHVDSGNPFGENNLEHHSQKSRRKPKFINFDLAKKRAFSLDSLEANIKVVREPDERIVLRSQSPPPLNSGHFRKPLLNHQGDVDFHPETTVTTSQLSSPPSPLDHSLLQERFQPCSASMWQKIQERACSLLTPNRAHPKEDSISETNSIHERPSYLLRKHLLREHRYF.

The tract at residues 170 to 215 is disordered; that stretch reads KLNGPANNRKKKPKEKNSDQLSKGTPFWGPSPQRLHLHRPTQRNPG. Phosphoserine occurs at positions 269 and 272.

The protein belongs to the SPATA6 family.

In Rattus norvegicus (Rat), this protein is Spermatogenesis associated 6-like protein (Spata6l).